The primary structure comprises 279 residues: Large ribosomal subunit protein uL2 (279 aa).

Disordered regions lie at residues 1–28 (MPAR…TKEK) and 221–279 (RGTV…GRRR). Polar residues predominate over residues 12-22 (GRRNSSVLTRD).

The protein belongs to the universal ribosomal protein uL2 family. In terms of assembly, part of the 50S ribosomal subunit. Forms a bridge to the 30S subunit in the 70S ribosome.

Its function is as follows. One of the primary rRNA binding proteins. Required for association of the 30S and 50S subunits to form the 70S ribosome, for tRNA binding and peptide bond formation. It has been suggested to have peptidyltransferase activity; this is somewhat controversial. Makes several contacts with the 16S rRNA in the 70S ribosome. This Rubrobacter xylanophilus (strain DSM 9941 / JCM 11954 / NBRC 16129 / PRD-1) protein is Large ribosomal subunit protein uL2.